Consider the following 136-residue polypeptide: Protein PsiE homolog (136 aa).

A run of 4 helical transmembrane segments spans residues 15–35 (ILQT…VVFL), 55–75 (YELV…ALIV), 82–102 (FHFP…RLII), and 108–128 (PLDV…LWLC).

It belongs to the PsiE family.

It is found in the cell inner membrane. The polypeptide is Protein PsiE homolog (Enterobacter sp. (strain 638)).